The following is a 320-amino-acid chain: MARNKIALIGSGMIGGTLAHLAGLKELGDVVLFDIAEGIPQGKGLDIAESSPVDGFDAKYTGANDYAAIEGADVVIVTAGVPRKPGMSRDDLLGINLKVMEQVGAGIKKYAPEAFVICITNPLDAMVWALQKFSGLPAHKVVGMAGVLDSARFRYFLSEEFNVSVEDVTAFVLGGHGDSMVPLARYSTVAGIPLPDLVKMGWTSQDKLDKIIQRTRDGGAEIVGLLKTGSAFYAPAASAIQMAESYLKDKKRVLPVAAQLTGQYGVKDMYVGVPTVIGANGVERIIEIDLDKNEKAEFDKSVASVAGLCEACIGIAPSLK.

NAD(+) contacts are provided by residues 10–15 (GSGMIG) and Asp34. Substrate-binding residues include Arg83 and Arg89. NAD(+) contacts are provided by residues Asn96 and 119 to 121 (ITN). Substrate contacts are provided by Asn121 and Arg152. His176 acts as the Proton acceptor in catalysis.

Belongs to the LDH/MDH superfamily. MDH type 3 family.

The catalysed reaction is (S)-malate + NAD(+) = oxaloacetate + NADH + H(+). Catalyzes the reversible oxidation of malate to oxaloacetate. The protein is Malate dehydrogenase of Brucella anthropi (strain ATCC 49188 / DSM 6882 / CCUG 24695 / JCM 21032 / LMG 3331 / NBRC 15819 / NCTC 12168 / Alc 37) (Ochrobactrum anthropi).